Consider the following 72-residue polypeptide: DNA-directed RNA polymerase subunit Rpo10 (72 aa).

Cys7, Cys10, Cys45, and Cys46 together coordinate Zn(2+).

The protein belongs to the archaeal Rpo10/eukaryotic RPB10 RNA polymerase subunit family. Part of the RNA polymerase complex. Zn(2+) is required as a cofactor.

It is found in the cytoplasm. The catalysed reaction is RNA(n) + a ribonucleoside 5'-triphosphate = RNA(n+1) + diphosphate. Functionally, DNA-dependent RNA polymerase (RNAP) catalyzes the transcription of DNA into RNA using the four ribonucleoside triphosphates as substrates. The protein is DNA-directed RNA polymerase subunit Rpo10 of Methanopyrus kandleri (strain AV19 / DSM 6324 / JCM 9639 / NBRC 100938).